The sequence spans 306 residues: Protein translocase subunit SecF (306 aa).

6 helical membrane passes run 17–37 (AFAV…TKGI), 134–154 (GLGM…RFQW), 158–178 (LGAI…LSFF), 185–205 (TVLA…IVIF), 232–254 (LLRT…FFGG), and 268–288 (VMAG…WLNL).

This sequence belongs to the SecD/SecF family. SecF subfamily. Forms a complex with SecD. Part of the essential Sec protein translocation apparatus which comprises SecA, SecYEG and auxiliary proteins SecDF-YajC and YidC.

Its subcellular location is the cell inner membrane. Part of the Sec protein translocase complex. Interacts with the SecYEG preprotein conducting channel. SecDF uses the proton motive force (PMF) to complete protein translocation after the ATP-dependent function of SecA. The sequence is that of Protein translocase subunit SecF from Pseudomonas aeruginosa (strain ATCC 15692 / DSM 22644 / CIP 104116 / JCM 14847 / LMG 12228 / 1C / PRS 101 / PAO1).